A 329-amino-acid polypeptide reads, in one-letter code: Sex comb on midleg-like protein 1 (329 aa).

The tract at residues 136–160 (SYSPTLPVSRRENNSPSNLPRPSFC) is disordered. Phosphoserine occurs at positions 138 and 238. In terms of domain architecture, SAM spans 258–325 (WSVEAVVLFL…YYIDRLKQGK (68 aa)).

The protein belongs to the SCM family.

It is found in the nucleus. Functionally, putative Polycomb group (PcG) protein. PcG proteins act by forming multiprotein complexes, which are required to maintain the transcriptionally repressive state of homeotic genes throughout development. May be involved in spermatogenesis during sexual maturation. The protein is Sex comb on midleg-like protein 1 (SCML1) of Pongo pygmaeus (Bornean orangutan).